Consider the following 1953-residue polypeptide: TATA-binding protein-associated factor mot1 (1953 aa).

The stretch at 36–74 (PDELYNLLGRVVPYLKSKNWDTRVAAAKAIGGIVENVPV) is one HEAT 1 repeat. The tract at residues 79–141 (RTSPVKKEET…KLEEERLSTR (63 aa)) is disordered. The segment covering 98-108 (TEEKPFIKTEE) has biased composition (basic and acidic residues). Residues 113 to 130 (SSQSQVVVSSNLTSNSEV) are compositionally biased toward low complexity. Over residues 131 to 141 (SKLEEERLSTR) the composition is skewed to basic and acidic residues. Position 144 is a phosphoserine (Ser144). The tract at residues 240–278 (DNVGSNSKGSPTTSIPEHKTSINNNKPEDTPTPSENVHL) is disordered. Residues 242–276 (VGSNSKGSPTTSIPEHKTSINNNKPEDTPTPSENV) show a composition bias toward polar residues. 4 HEAT repeats span residues 358–396 (VWPF…YAGF), 513–551 (SDYL…KLVQ), 554–592 (LSSC…LCSF), and 608–646 (EFSF…VQTS). Disordered stretches follow at residues 730–762 (SGQP…KDDP) and 1078–1103 (DDND…KSSL). HEAT repeat units follow at residues 1191–1229 (QSEI…SNAA) and 1270–1311 (VRIL…LVPL). The region spanning 1370-1543 (AFLNKYELHG…WSLFDFLMPG (174 aa)) is the Helicase ATP-binding domain. 1383-1390 (DDMGLGKT) serves as a coordination point for ATP. Positions 1494-1497 (DEGH) match the DEGH box motif. One copy of the HEAT 8 repeat lies at 1580–1623 (EAIHKQVLPFMLRRLKEDVLADLPPKIIQDYYCDMSDLQRKLLN). The Helicase C-terminal domain maps to 1725-1877 (GIDSALTNAV…STVVNQQNAG (153 aa)). A disordered region spans residues 1901–1920 (QNIDKEESEDAAGRGLSGTS).

This sequence belongs to the SNF2/RAD54 helicase family. As to quaternary structure, forms a complex with TBP which binds TATA DNA.

It is found in the nucleus. In terms of biological role, regulates transcription in association with TATA binding protein (TBP). Removes TBP from the TATA box via its ATPase activity. The sequence is that of TATA-binding protein-associated factor mot1 from Schizosaccharomyces pombe (strain 972 / ATCC 24843) (Fission yeast).